The following is a 272-amino-acid chain: Glutamate racemase (272 aa).

Residues 16–17 (DS) and 48–49 (YG) contribute to the substrate site. Residue cysteine 79 is the Proton donor/acceptor of the active site. 80–81 (NT) contacts substrate. The Proton donor/acceptor role is filled by cysteine 191. Residue 192 to 193 (TH) participates in substrate binding.

This sequence belongs to the aspartate/glutamate racemases family.

It carries out the reaction L-glutamate = D-glutamate. The protein operates within cell wall biogenesis; peptidoglycan biosynthesis. Provides the (R)-glutamate required for cell wall biosynthesis. This Chlorobium phaeobacteroides (strain DSM 266 / SMG 266 / 2430) protein is Glutamate racemase.